The chain runs to 386 residues: Prostacyclin receptor (386 aa).

Residues 1 to 16 (MADSCRNLTYVRGSVG) lie on the Extracellular side of the membrane. Disulfide bonds link cysteine 5–cysteine 165 and cysteine 92–cysteine 170. Asparagine 7 is a glycosylation site (N-linked (GlcNAc...) asparagine). The chain crosses the membrane as a helical span at residues 17–38 (PATSTLMFVAGVVGNGLALGIL). Topologically, residues 39 to 51 (SARRPARPSAFAV) are cytoplasmic. The chain crosses the membrane as a helical span at residues 52 to 76 (LVTGLAATDLLGTSFLSPAVFVAYA). Over 77-94 (RNSSLLGLARGGPALCDA) the chain is Extracellular. The helical transmembrane segment at 95-115 (FAFAMTFFGLASMLILFAMAV) threads the bilayer. The Cytoplasmic portion of the chain corresponds to 116–134 (ERCLALSHPYLYAQLDGPR). A helical membrane pass occupies residues 135-158 (CARLALPAIYAFCVLFCALPLLGL). Residues 159–181 (GQHQQYCPGSWCFLRMRWAQPGG) are Extracellular-facing. A helical membrane pass occupies residues 182–208 (AAFSLAYAGLVALLVAAIFLCNGSVTL). Residues 209–235 (SLCRMYRQQKRHQGSLGPRPRTGEDEV) are Cytoplasmic-facing. A helical transmembrane segment spans residues 236-260 (DHLILLALMTVVMAVCSLPLTIRCF). Over 261 to 274 (TQAVAPDSSSEMGD) the chain is Extracellular. Residues 275–295 (LLAFRFYAFNPILDPWVFILF) form a helical membrane-spanning segment. Residues 296–386 (RKAVFQRLKL…AEASVACSLC (91 aa)) lie on the Cytoplasmic side of the membrane. Residues 322–376 (PLSQLASGRRDPRAPSAPVGKEGSCVPLSAWGEGQVEPLPPTQQSSGSAVGTSSK) are disordered. Over residues 363–376 (TQQSSGSAVGTSSK) the composition is skewed to polar residues. Cysteine 383 is subject to Cysteine methyl ester. Cysteine 383 carries S-farnesyl cysteine lipidation. A propeptide spans 384-386 (SLC) (removed in mature form).

The protein belongs to the G-protein coupled receptor 1 family. In terms of assembly, interacts (non-isoprenylated C-terminus) with PDZK1. In terms of processing, isoprenylation does not influence ligand binding but is required for efficient coupling to the effectors adenylyl cyclase and phospholipase C.

Its subcellular location is the cell membrane. Functionally, receptor for prostacyclin (prostaglandin I2 or PGI2). The activity of this receptor is mediated by G(s) proteins which activate adenylate cyclase. The sequence is that of Prostacyclin receptor (PTGIR) from Homo sapiens (Human).